Consider the following 344-residue polypeptide: L-erythro-3,5-diaminohexanoate dehydrogenase (344 aa).

This sequence belongs to the KDD family. Homodimer.

It catalyses the reaction (3S,5S)-3,5-diaminohexanoate + NAD(+) + H2O = (5S)-5-amino-3-oxohexanoate + NH4(+) + NADH + H(+). Its pathway is amino-acid degradation; L-lysine degradation via acetate pathway. In terms of biological role, involved in the anaerobic fermentation of lysine. Catalyzes the oxidative deamination of L-erythro-3,5-diaminohexanoate (3,5-DAH) to 3-keto-5-aminohexanoate (KAH). The sequence is that of L-erythro-3,5-diaminohexanoate dehydrogenase from Acetoanaerobium sticklandii (strain ATCC 12662 / DSM 519 / JCM 1433 / CCUG 9281 / NCIMB 10654 / HF) (Clostridium sticklandii).